The following is a 323-amino-acid chain: Elongation factor P--(R)-beta-lysine ligase (323 aa).

Substrate is bound at residue 74–76 (SPE). ATP is bound by residues 98-100 (RNE) and N107. Y116 lines the substrate pocket. 242–243 (EL) provides a ligand contact to ATP. E249 contacts substrate. G298 lines the ATP pocket.

This sequence belongs to the class-II aminoacyl-tRNA synthetase family. EpmA subfamily. In terms of assembly, homodimer.

The catalysed reaction is D-beta-lysine + L-lysyl-[protein] + ATP = N(6)-((3R)-3,6-diaminohexanoyl)-L-lysyl-[protein] + AMP + diphosphate + H(+). Functionally, with EpmB is involved in the beta-lysylation step of the post-translational modification of translation elongation factor P (EF-P). Catalyzes the ATP-dependent activation of (R)-beta-lysine produced by EpmB, forming a lysyl-adenylate, from which the beta-lysyl moiety is then transferred to the epsilon-amino group of a conserved specific lysine residue in EF-P. In Vibrio vulnificus (strain YJ016), this protein is Elongation factor P--(R)-beta-lysine ligase.